The sequence spans 296 residues: 4-diphosphocytidyl-2-C-methyl-D-erythritol kinase (296 aa).

Lys-18 is an active-site residue. 103-113 (PHGAGLGGGSS) contacts ATP. Residue Asp-146 is part of the active site.

It belongs to the GHMP kinase family. IspE subfamily.

The enzyme catalyses 4-CDP-2-C-methyl-D-erythritol + ATP = 4-CDP-2-C-methyl-D-erythritol 2-phosphate + ADP + H(+). Its pathway is isoprenoid biosynthesis; isopentenyl diphosphate biosynthesis via DXP pathway; isopentenyl diphosphate from 1-deoxy-D-xylulose 5-phosphate: step 3/6. Catalyzes the phosphorylation of the position 2 hydroxy group of 4-diphosphocytidyl-2C-methyl-D-erythritol. The protein is 4-diphosphocytidyl-2-C-methyl-D-erythritol kinase of Solidesulfovibrio magneticus (strain ATCC 700980 / DSM 13731 / RS-1) (Desulfovibrio magneticus).